The chain runs to 263 residues: Endonuclease 8 (263 aa).

Pro2 functions as the Schiff-base intermediate with DNA in the catalytic mechanism. Glu3 functions as the Proton donor in the catalytic mechanism. Lys53 (proton donor; for beta-elimination activity) is an active-site residue. Gln70, Arg125, and Asn169 together coordinate DNA. The FPG-type zinc-finger motif lies at 229 to 263; sequence KVFHRDGEPCERCGSIIEKTTLSSRPFYWCPGCQH. Arg253 acts as the Proton donor; for delta-elimination activity in catalysis.

The protein belongs to the FPG family. The cofactor is Zn(2+).

The catalysed reaction is 2'-deoxyribonucleotide-(2'-deoxyribose 5'-phosphate)-2'-deoxyribonucleotide-DNA = a 3'-end 2'-deoxyribonucleotide-(2,3-dehydro-2,3-deoxyribose 5'-phosphate)-DNA + a 5'-end 5'-phospho-2'-deoxyribonucleoside-DNA + H(+). Its function is as follows. Involved in base excision repair of DNA damaged by oxidation or by mutagenic agents. Acts as a DNA glycosylase that recognizes and removes damaged bases. Has a preference for oxidized pyrimidines, such as thymine glycol, 5,6-dihydrouracil and 5,6-dihydrothymine. Has AP (apurinic/apyrimidinic) lyase activity and introduces nicks in the DNA strand. Cleaves the DNA backbone by beta-delta elimination to generate a single-strand break at the site of the removed base with both 3'- and 5'-phosphates. The chain is Endonuclease 8 from Escherichia coli (strain K12 / MC4100 / BW2952).